An 828-amino-acid chain; its full sequence is Potassium channel SKOR (828 aa).

Residues 1–86 (MGGSSGGGVS…PDNRWYKAWT (86 aa)) lie on the Cytoplasmic side of the membrane. A helical transmembrane segment spans residues 87-107 (MFILIWALYSSFFTPLEFGFF). The Extracellular segment spans residues 108–114 (RGLPENL). The chain crosses the membrane as a helical span at residues 115-135 (FILDIAGQIAFLVDIVLTFFV). Residues 136–158 (AYRDSRTYRMIYKRSSIALRYLK) are Cytoplasmic-facing. The helical transmembrane segment at 159-179 (STFIIDLLACMPWDIIYKAAG) threads the bilayer. Residues 180 to 185 (EKEEVR) lie on the Extracellular side of the membrane. A helical; Voltage-sensor transmembrane segment spans residues 186-206 (YLLLIRLYRVHRVILFFHKME). Residues 207–220 (KDIRINYLFTRIVK) are Cytoplasmic-facing. Residues 221-241 (LIFVELYCTHTAACIFYYLAT) form a helical membrane-spanning segment. Topologically, residues 242–276 (TLPASQEGYTWIGSLKLGDYSYSKFREIDLWTRYT) are extracellular. The segment at residues 277–296 (TSMYFAVVTMATVGYGDIHA) is an intramembrane region (pore-forming). Topologically, residues 297–300 (VNMR) are extracellular. A helical membrane pass occupies residues 301–321 (EMIFAMVYISFDMILGAYLIG). Residues 322–828 (NMTALIVKGS…GQKLYLAVET (507 aa)) lie on the Cytoplasmic side of the membrane. 403 to 523 (LFRGCSSEFI…RRILNNLLEG (121 aa)) is a binding site for a nucleoside 3',5'-cyclic phosphate. 6 ANK repeats span residues 545–576 (EAEL…DPNK), 580–609 (DGRS…DVNI), 613–642 (LGST…TLNI), 644–673 (NAGT…DPNS), 677–706 (DHRT…NVLA), and 710–740 (WGNT…QISS). Positions 756–828 (KCTVYFSHPG…GQKLYLAVET (73 aa)) constitute a KHA domain.

The protein belongs to the potassium channel family. Plant (TC 1.A.1.4) subfamily. In terms of assembly, the potassium channel is probably composed of a homo- or heterotetrameric complex of pore-forming subunits. As to expression, expressed in root pericycle and xylem parenchyma, and in flower at a lower level.

The protein localises to the membrane. Highly selective outward-rectifying potassium channel. Involved in potassium release into the xylem sap toward the shoots. Assuming opened or closed conformations in response to the voltage difference across the membrane, the channel is activated by depolarization. The voltage-dependence of the channel is abolished by internal or external acidification. May interact with the cytoskeleton or with regulatory proteins. This Arabidopsis thaliana (Mouse-ear cress) protein is Potassium channel SKOR (SKOR).